Consider the following 242-residue polypeptide: DNA repair protein RecO (242 aa).

It belongs to the RecO family. In terms of assembly, monomer.

Involved in DNA repair and RecF pathway recombination. This is DNA repair protein RecO from Shigella dysenteriae serotype 1 (strain Sd197).